A 180-amino-acid chain; its full sequence is Large ribosomal subunit protein bL19 (180 aa).

It belongs to the bacterial ribosomal protein bL19 family.

This protein is located at the 30S-50S ribosomal subunit interface and may play a role in the structure and function of the aminoacyl-tRNA binding site. The chain is Large ribosomal subunit protein bL19 from Allorhizobium ampelinum (strain ATCC BAA-846 / DSM 112012 / S4) (Agrobacterium vitis (strain S4)).